A 116-amino-acid chain; its full sequence is Tyrosine-protein phosphatase 20 (116 aa).

The region spanning 1 to 116 is the Tyrosine-protein phosphatase domain; sequence WMMIVEQKCR…EIGGDAPMVV (116 aa). Aspartate 84 contributes to the substrate binding site.

Belongs to the protein-tyrosine phosphatase family.

It catalyses the reaction O-phospho-L-tyrosyl-[protein] + H2O = L-tyrosyl-[protein] + phosphate. The sequence is that of Tyrosine-protein phosphatase 20 (STY-20) from Styela plicata (Wrinkled sea squirt).